A 448-amino-acid chain; its full sequence is Zinc finger and BTB domain-containing protein 14 (448 aa).

Residues Cys-36–Lys-102 enclose the BTB domain. Positions His-50–Lys-66 match the Nuclear localization signal motif. The interval Val-130 to Thr-193 is disordered. The span at Asp-156–Asp-167 shows a compositional bias: acidic residues. 5 consecutive C2H2-type zinc fingers follow at residues Ile-275–Pro-302, Phe-303–Pro-330, Tyr-331–Pro-358, Phe-359–Pro-386, and Phe-387–Gln-415. Residues Arg-404 to Gln-415 are compositionally biased toward basic and acidic residues. The tract at residues Arg-404–Glu-425 is disordered. Residues Val-416–Glu-425 show a composition bias toward polar residues.

It belongs to the krueppel C2H2-type zinc-finger protein family. As to quaternary structure, interacts with ZBTB21.

The protein resides in the nucleus. Its function is as follows. Transcriptional activator of the dopamine transporter (DAT), binding it's promoter at the consensus sequence 5'-CCTGCACAGTTCACGGA-3'. Binds to 5'-d(GCC)(n)-3' trinucleotide repeats in promoter regions and acts as a repressor of the FMR1 gene. Transcriptional repressor of MYC and thymidine kinase promoters. The chain is Zinc finger and BTB domain-containing protein 14 (ZBTB14) from Gallus gallus (Chicken).